A 76-amino-acid chain; its full sequence is uncharacterized protein (76 aa).

This sequence to K.pneumoniae LtrA, E.coli YjiE, and YhcS.

This is an uncharacterized protein from Escherichia coli O6:H1 (strain CFT073 / ATCC 700928 / UPEC).